The sequence spans 317 residues: Acetyl-coenzyme A carboxylase carboxyl transferase subunit alpha (317 aa).

The region spanning 41 to 291 is the CoA carboxyltransferase C-terminal domain; that stretch reads KVDKLLRSTY…SMALDSALRD (251 aa).

This sequence belongs to the AccA family. Acetyl-CoA carboxylase is a heterohexamer composed of biotin carboxyl carrier protein (AccB), biotin carboxylase (AccC) and two subunits each of ACCase subunit alpha (AccA) and ACCase subunit beta (AccD).

It is found in the cytoplasm. The catalysed reaction is N(6)-carboxybiotinyl-L-lysyl-[protein] + acetyl-CoA = N(6)-biotinyl-L-lysyl-[protein] + malonyl-CoA. It participates in lipid metabolism; malonyl-CoA biosynthesis; malonyl-CoA from acetyl-CoA: step 1/1. Component of the acetyl coenzyme A carboxylase (ACC) complex. First, biotin carboxylase catalyzes the carboxylation of biotin on its carrier protein (BCCP) and then the CO(2) group is transferred by the carboxyltransferase to acetyl-CoA to form malonyl-CoA. In Paramagnetospirillum magneticum (strain ATCC 700264 / AMB-1) (Magnetospirillum magneticum), this protein is Acetyl-coenzyme A carboxylase carboxyl transferase subunit alpha.